The following is a 444-amino-acid chain: MAKKYFGTDGVRGEVGQFPITPDFVLKLGYAAGQVLVQHDTDQKPTVLIGKDTRISGYMLEAALVAGFTAAGVNVVQTGPLPTPGVAYLTRALRLSAGVMISASHNTYSDNGIKFFAEGGVKLSDEVELEIEAKIDEEMKTQPSARLGRARRISGADDRYIEFCKSTFPGHSDLRGLKLVIDTANGAGYGVAPKVFHELGAQVVSIGNEPNGYNINEKCGATHTKTLQAAVLQNEADYGIALDGDGDRLMMVDKNRQVYDGDSLIYVIAKARAREGINIGGVVGTVMTNMAMEIALKEQGVDFCRAKVGDRYVLEQLNQRGWLIGGEASGHILCMDKHNTGDGIISALQVLAALQILNQDLATVCADWQPYPQTMINVRIQKGQKWQEASKDVLAEVEKELEGKGRVVLRASGTEPVVRVMVEARQADWARDGAERIAAAIGGI.

S104 (phosphoserine intermediate) is an active-site residue. The Mg(2+) site is built by S104, D243, D245, and D247. Residue S104 is modified to Phosphoserine.

The protein belongs to the phosphohexose mutase family. The cofactor is Mg(2+). Activated by phosphorylation.

The catalysed reaction is alpha-D-glucosamine 1-phosphate = D-glucosamine 6-phosphate. In terms of biological role, catalyzes the conversion of glucosamine-6-phosphate to glucosamine-1-phosphate. This Neisseria gonorrhoeae (strain ATCC 700825 / FA 1090) protein is Phosphoglucosamine mutase.